Here is a 122-residue protein sequence, read N- to C-terminus: Large ribosomal subunit protein uL14 (122 aa).

It belongs to the universal ribosomal protein uL14 family. As to quaternary structure, part of the 50S ribosomal subunit. Forms a cluster with proteins L3 and L19. In the 70S ribosome, L14 and L19 interact and together make contacts with the 16S rRNA in bridges B5 and B8.

Functionally, binds to 23S rRNA. Forms part of two intersubunit bridges in the 70S ribosome. This is Large ribosomal subunit protein uL14 from Borreliella burgdorferi (strain ZS7) (Borrelia burgdorferi).